The following is a 322-amino-acid chain: 2-oxoglutarate-dependent dioxygenase caaD (322 aa).

The Fe2OG dioxygenase domain maps to 172–279 (TGNAAMFLKL…FAVPAFWHGD (108 aa)). Residues H200, D202, and H259 each coordinate Fe cation. A 2-oxoglutarate-binding site is contributed by R269.

It belongs to the iron/ascorbate-dependent oxidoreductase family. It depends on Fe(2+) as a cofactor.

It participates in secondary metabolite biosynthesis. In terms of biological role, 2-oxoglutarate-dependent dioxygenase; part of the gene cluster that produces the acyltetronic acid derivatives carlosic acid, agglomerin F and carlosic acid methyl ether. CaaD catalyzes the sequential oxidations of the terminal C-10 methyl group of the caaC product to form carboxylic acid which is necessary for the biosynthesis of agglomerin F. The chain is 2-oxoglutarate-dependent dioxygenase caaD from Aspergillus niger (strain ATCC MYA-4892 / CBS 513.88 / FGSC A1513).